The primary structure comprises 366 residues: 5-hydroxytryptamine receptor 1F (366 aa).

Residues 1–24 (MDFLNASDQNLTSEELLNRMPSKI) are Extracellular-facing. Asn5 and Asn10 each carry an N-linked (GlcNAc...) asparagine glycan. The chain crosses the membrane as a helical span at residues 25 to 49 (LVSLTLSGLALMTTTINSLVIAAII). Topologically, residues 50–59 (VTRKLHHPAN) are cytoplasmic. The chain crosses the membrane as a helical span at residues 60–81 (YLICSLAVTDFLVAVLVMPFSI). The Extracellular segment spans residues 82–96 (VYIVRESWIMGQVLC). The cysteines at positions 96 and 172 are disulfide-linked. The helical transmembrane segment at 97–119 (DIWLSVDIICCTCSILHLSAIAL) threads the bilayer. Serotonin-binding residues include Asp103 and Cys107. The DRY motif; important for ligand-induced conformation changes signature appears at 120–122 (DRY). Residues 120-139 (DRYRAITDAVEYARKRTPRH) lie on the Cytoplasmic side of the membrane. The chain crosses the membrane as a helical span at residues 140 to 159 (AGIMITIVWVISVFISMPPL). The Extracellular segment spans residues 160–178 (FWRHQGTSRDDECVIKHDH). The chain crosses the membrane as a helical span at residues 179-202 (IVSTIYSTFGAFYIPLVLILILYY). Topologically, residues 203–291 (KIYRAARTLY…KISGTRERKA (89 aa)) are cytoplasmic. A helical transmembrane segment spans residues 292-315 (ATTLGLILGAFVICWLPFFVKELV). Over 316-327 (VNVCEKCKISEE) the chain is Extracellular. A helical transmembrane segment spans residues 328–350 (MSNFLAWLGYLNSLINPLIYTIF). The NPxxY motif; important for ligand-induced conformation changes and signaling signature appears at 343-347 (NPLIY). Topologically, residues 351–366 (NEDFKKAFQKLVRCRY) are cytoplasmic.

It belongs to the G-protein coupled receptor 1 family. In terms of tissue distribution, detected in hippocampus.

The protein localises to the cell membrane. In terms of biological role, G-protein coupled receptor for 5-hydroxytryptamine (serotonin). Also functions as a receptor for various alkaloids and psychoactive substances. Ligand binding causes a conformation change that triggers signaling via guanine nucleotide-binding proteins (G proteins) and modulates the activity of downstream effectors, such as adenylate cyclase. HTR1F is coupled to G(i)/G(o) G alpha proteins and mediates inhibitory neurotransmission by inhibiting adenylate cyclase activity. This Mus musculus (Mouse) protein is 5-hydroxytryptamine receptor 1F (Htr1f).